Reading from the N-terminus, the 76-residue chain is Acyl carrier protein (76 aa).

One can recognise a Carrier domain in the interval 1–74 (MEERIKEIIA…DVINYIKEKK (74 aa)). Ser34 is subject to O-(pantetheine 4'-phosphoryl)serine.

Belongs to the acyl carrier protein (ACP) family. 4'-phosphopantetheine is transferred from CoA to a specific serine of apo-ACP by AcpS. This modification is essential for activity because fatty acids are bound in thioester linkage to the sulfhydryl of the prosthetic group.

The protein resides in the cytoplasm. It participates in lipid metabolism; fatty acid biosynthesis. Its function is as follows. Carrier of the growing fatty acid chain in fatty acid biosynthesis. This is Acyl carrier protein from Persephonella marina (strain DSM 14350 / EX-H1).